The primary structure comprises 1430 residues: MGARASVLSGGKLDAWEKIRLRPGGKKKYKLKHLVWASRELERFALNPGLLETTEGCRQIITQIQPSIQTGSEEIKSLYNTIAVLYFVHQKIEVKDTKEALDKLEEEQNKSQRKTQQEAADKGVSQNYPIVQNLQGQMVHQALSPRTLNAWVKVIEEKAFSPEVIPMFTALSEGATPQDLNTMLNTVGGHQAAMQMLKDTINDEAAEWDRLHPVHAGPIPPGQMREPRGSDIAGTTSTLQEQIAWMTSNPPVPVGEIYKRWIILGLNKIVRMYSPVSILDIRQGPKEPFRDYVDRFFKTLRAEQATQEVKNWMTDTLLVQNANPDCKTILKALGPGASLEEMMTACQGVGGPSHKARILAEAMSQVTNPVVMMQKGNFKGHRKIVKCFNCGKEGHIARNCRAPRKKGCWKCGKEGHQMKDCTERQANFFRENLAFPQGEAREFSSEQTRANSPTSRELRVRGGDNPLSEAGDQRQGTEPSFNFPQITLWQRPIVTIKVGGQLREALLDTGADDTVLEEINLPGKWKPKMIGGIGGFIKVRQYDQVLIEICGQKAIGTVLVGPTPVNIIGRNLLTQIGCTLNFPISPIETVPVKLKPGMDGPKVKQWPLTEEKIKALTEICTEMEKEGKISKIGPENPYNTPVFAIKKKDSTKWRKLVDFRELNKRTQDFWEVQLGIPHPAGLKKKKSVTVLDVGDAYFSVPLDKDFRKYTAFTIPSINNETPGVRYQYNVLPQGWKGSPAIFQHSMTKILEPFRIKNPEMVIYQYMDDLYVGSDLEIGQPRTKIEELREHLLKWGFTTPDKKHQKEPPFLWMGYELHPDKWTVQPIQLPDKDSWTVNDIQKLVGKLNWASQIYPGIKVKQLCKLLRGVKALTDIVPLTAEAELELAENREILKEPVHGVYYDPSKDLIAEIQKQGNDQWTYQIYQEPHKNLKTGKYARMRSAHTNDVKQLTEAVQKIATEGIVIWGKTPKFRLPIQKETWETWWTEYWQATWIPEWEFVNTPPLVKLWYQLETEPIVGAETFYVDGAAHRETKKGRAGYVTDRGRQKVVSITETTNQKAELQAICLALQDSGSEVNIVTDSQYALGIIQAQPDKSESDLVNQIIEQLIKKERIYLSWVPAHKGIGGNEQVDKLVSAGIRKVLFLDGIDKAQEEHEKYHNNWRAMASDFNLPPIVAKEIVASCDKCQLKGEAIHGQVDCSPGIWQLDCTHLEGKIILVAVHVASGYIEAEVIPAETGQETAYFILKLAGRWPVKVIHTDNGTNFTSTVVKAACWWAGVKQEFGIPYNPQSQGVVESMNKELKKIIGQVRDQAEHLKTAVQMAVFIHNFKRKGGIGGYSAGERIVDIIATDIQTKELQKQILNIQKFRVYYRDSREPIWKGPAKLLWKGEGAVVIQDNSEIKVVPRRKAKIIRDYGKQMAGDDCVAGRQDED.

A lipid anchor (N-myristoyl glycine; by host) is attached at G2. The segment at V7–L31 is interaction with Gp41. An interaction with host CALM1 region spans residues L8–R43. The interval K12–I19 is interaction with host AP3D1. The segment at D14 to H33 is interaction with membrane phosphatidylinositol 4,5-bisphosphate and RNA. The short motif at W16–R22 is the Nuclear export signal element. The Nuclear localization signal signature appears at K26 to K32. Residues E73–S77 form an interaction with membrane phosphatidylinositol 4,5-bisphosphate region. A Phosphotyrosine; by host modification is found at Y128. The interaction with human PPIA/CYPA and NUP153 stretch occupies residues N185 to Q223. Residues Y273–L359 form a dimerization/Multimerization of capsid protein p24 region. 2 CCHC-type zinc fingers span residues V385–A402 and K406–E423. Positions E439–S480 are disordered. Over residues S445 to S455 the composition is skewed to polar residues. The interval P484–L488 is dimerization of protease. In terms of domain architecture, Peptidase A2 spans R503 to L572. D508 acts as the For protease activity; shared with dimeric partner in catalysis. Dimerization of protease regions lie at residues G532–K538 and N571–P583. The Reverse transcriptase domain maps to E626–L816. Mg(2+) contacts are provided by D692, D767, and D768. Residues F809 to H817 form an RT 'primer grip' region. The Tryptophan repeat motif signature appears at W980–W996. One can recognise an RNase H type-1 domain in the interval I1016 to R1139. Mg(2+) is bound by residues D1025, E1060, D1080, and D1131. The Integrase-type zinc finger occupies D1145–Q1186. The Zn(2+) site is built by H1154, H1158, C1182, and C1185. The 151-residue stretch at V1196–I1346 folds into the Integrase catalytic domain. D1206, D1258, and E1294 together coordinate Mg(2+). The integrase-type DNA-binding region spans F1365 to D1412.

As to quaternary structure, homotrimer; further assembles as hexamers of trimers. Interacts with gp41 (via C-terminus). Interacts with host CALM1; this interaction induces a conformational change in the Matrix protein, triggering exposure of the myristate group. Interacts with host AP3D1; this interaction allows the polyprotein trafficking to multivesicular bodies during virus assembly. Part of the pre-integration complex (PIC) which is composed of viral genome, matrix protein, Vpr and integrase. Homodimer; the homodimer further multimerizes as homohexamers or homopentamers. Interacts with human PPIA/CYPA; This interaction stabilizes the capsid. Interacts with human NUP153. Interacts with host PDZD8; this interaction stabilizes the capsid. Interacts with monkey TRIM5; this interaction destabilizes the capsid. In terms of assembly, homodimer, whose active site consists of two apposed aspartic acid residues. As to quaternary structure, heterodimer of p66 RT and p51 RT (RT p66/p51). Heterodimerization of RT is essential for DNA polymerase activity. The overall folding of the subdomains is similar in p66 RT and p51 RT but the spatial arrangements of the subdomains are dramatically different. Homotetramer; may further associate as a homohexadecamer. Part of the pre-integration complex (PIC) which is composed of viral genome, matrix protein, Vpr and integrase. Interacts with human SMARCB1/INI1 and human PSIP1/LEDGF isoform 1. Interacts with human KPNA3; this interaction might play a role in nuclear import of the pre-integration complex. Interacts with human NUP153; this interaction might play a role in nuclear import of the pre-integration complex. Requires Mg(2+) as cofactor. Specific enzymatic cleavages by the viral protease yield mature proteins. The protease is released by autocatalytic cleavage. The polyprotein is cleaved during and after budding, this process is termed maturation. Proteolytic cleavage of p66 RT removes the RNase H domain to yield the p51 RT subunit. Nucleocapsid protein p7 might be further cleaved after virus entry. Post-translationally, tyrosine phosphorylated presumably in the virion by a host kinase. Phosphorylation is apparently not a major regulator of membrane association. In terms of processing, phosphorylated possibly by host MAPK1; this phosphorylation is necessary for Pin1-mediated virion uncoating. Methylated by host PRMT6, impairing its function by reducing RNA annealing and the initiation of reverse transcription.

It is found in the host cell membrane. The protein resides in the host endosome. Its subcellular location is the host multivesicular body. The protein localises to the virion membrane. It localises to the host nucleus. It is found in the host cytoplasm. The protein resides in the virion. It carries out the reaction Specific for a P1 residue that is hydrophobic, and P1' variable, but often Pro.. The catalysed reaction is Endohydrolysis of RNA in RNA/DNA hybrids. Three different cleavage modes: 1. sequence-specific internal cleavage of RNA. Human immunodeficiency virus type 1 and Moloney murine leukemia virus enzymes prefer to cleave the RNA strand one nucleotide away from the RNA-DNA junction. 2. RNA 5'-end directed cleavage 13-19 nucleotides from the RNA end. 3. DNA 3'-end directed cleavage 15-20 nucleotides away from the primer terminus.. It catalyses the reaction 3'-end directed exonucleolytic cleavage of viral RNA-DNA hybrid.. The enzyme catalyses DNA(n) + a 2'-deoxyribonucleoside 5'-triphosphate = DNA(n+1) + diphosphate. With respect to regulation, protease: The viral protease is inhibited by many synthetic protease inhibitors (PIs), such as amprenavir, atazanavir, indinavir, loprinavir, nelfinavir, ritonavir and saquinavir. Use of protease inhibitors in tritherapy regimens permit more ambitious therapeutic strategies. Reverse transcriptase/ribonuclease H: RT can be inhibited either by nucleoside RT inhibitors (NRTIs) or by non nucleoside RT inhibitors (NNRTIs). NRTIs act as chain terminators, whereas NNRTIs inhibit DNA polymerization by binding a small hydrophobic pocket near the RT active site and inducing an allosteric change in this region. Classical NRTIs are abacavir, adefovir (PMEA), didanosine (ddI), lamivudine (3TC), stavudine (d4T), tenofovir (PMPA), zalcitabine (ddC), and zidovudine (AZT). Classical NNRTIs are atevirdine (BHAP U-87201E), delavirdine, efavirenz (DMP-266), emivirine (I-EBU), and nevirapine (BI-RG-587). The tritherapies used as a basic effective treatment of AIDS associate two NRTIs and one NNRTI. Functionally, mediates, with Gag polyprotein, the essential events in virion assembly, including binding the plasma membrane, making the protein-protein interactions necessary to create spherical particles, recruiting the viral Env proteins, and packaging the genomic RNA via direct interactions with the RNA packaging sequence (Psi). Gag-Pol polyprotein may regulate its own translation, by the binding genomic RNA in the 5'-UTR. At low concentration, the polyprotein would promote translation, whereas at high concentration, the polyprotein would encapsidate genomic RNA and then shut off translation. Targets the polyprotein to the plasma membrane via a multipartite membrane-binding signal, that includes its myristoylated N-terminus. Matrix protein is part of the pre-integration complex. Implicated in the release from host cell mediated by Vpu. Binds to RNA. Its function is as follows. Forms the conical core that encapsulates the genomic RNA-nucleocapsid complex in the virion. Most core are conical, with only 7% tubular. The core is constituted by capsid protein hexamer subunits. The core is disassembled soon after virion entry. Host restriction factors such as TRIM5-alpha or TRIMCyp bind retroviral capsids and cause premature capsid disassembly, leading to blocks in reverse transcription. Capsid restriction by TRIM5 is one of the factors which restricts HIV-1 to the human species. Host PIN1 apparently facilitates the virion uncoating. On the other hand, interactions with PDZD8 or CYPA stabilize the capsid. In terms of biological role, encapsulates and protects viral dimeric unspliced genomic RNA (gRNA). Binds these RNAs through its zinc fingers. Acts as a nucleic acid chaperone which is involved in rearangement of nucleic acid secondary structure during gRNA retrotranscription. Also facilitates template switch leading to recombination. As part of the polyprotein, participates in gRNA dimerization, packaging, tRNA incorporation and virion assembly. Functionally, aspartyl protease that mediates proteolytic cleavages of Gag and Gag-Pol polyproteins during or shortly after the release of the virion from the plasma membrane. Cleavages take place as an ordered, step-wise cascade to yield mature proteins. This process is called maturation. Displays maximal activity during the budding process just prior to particle release from the cell. Also cleaves Nef and Vif, probably concomitantly with viral structural proteins on maturation of virus particles. Hydrolyzes host EIF4GI and PABP1 in order to shut off the capped cellular mRNA translation. The resulting inhibition of cellular protein synthesis serves to ensure maximal viral gene expression and to evade host immune response. Also mediates cleavage of host YTHDF3. Mediates cleavage of host CARD8, thereby activating the CARD8 inflammasome, leading to the clearance of latent HIV-1 in patient CD4(+) T-cells after viral reactivation; in contrast, HIV-1 can evade CARD8-sensing when its protease remains inactive in infected cells prior to viral budding. Multifunctional enzyme that converts the viral RNA genome into dsDNA in the cytoplasm, shortly after virus entry into the cell. This enzyme displays a DNA polymerase activity that can copy either DNA or RNA templates, and a ribonuclease H (RNase H) activity that cleaves the RNA strand of RNA-DNA heteroduplexes in a partially processive 3' to 5' endonucleasic mode. Conversion of viral genomic RNA into dsDNA requires many steps. A tRNA(3)-Lys binds to the primer-binding site (PBS) situated at the 5'-end of the viral RNA. RT uses the 3' end of the tRNA primer to perform a short round of RNA-dependent minus-strand DNA synthesis. The reading proceeds through the U5 region and ends after the repeated (R) region which is present at both ends of viral RNA. The portion of the RNA-DNA heteroduplex is digested by the RNase H, resulting in a ssDNA product attached to the tRNA primer. This ssDNA/tRNA hybridizes with the identical R region situated at the 3' end of viral RNA. This template exchange, known as minus-strand DNA strong stop transfer, can be either intra- or intermolecular. RT uses the 3' end of this newly synthesized short ssDNA to perform the RNA-dependent minus-strand DNA synthesis of the whole template. RNase H digests the RNA template except for two polypurine tracts (PPTs) situated at the 5'-end and near the center of the genome. It is not clear if both polymerase and RNase H activities are simultaneous. RNase H probably can proceed both in a polymerase-dependent (RNA cut into small fragments by the same RT performing DNA synthesis) and a polymerase-independent mode (cleavage of remaining RNA fragments by free RTs). Secondly, RT performs DNA-directed plus-strand DNA synthesis using the PPTs that have not been removed by RNase H as primers. PPTs and tRNA primers are then removed by RNase H. The 3' and 5' ssDNA PBS regions hybridize to form a circular dsDNA intermediate. Strand displacement synthesis by RT to the PBS and PPT ends produces a blunt ended, linear dsDNA copy of the viral genome that includes long terminal repeats (LTRs) at both ends. Its function is as follows. Catalyzes viral DNA integration into the host chromosome, by performing a series of DNA cutting and joining reactions. This enzyme activity takes place after virion entry into a cell and reverse transcription of the RNA genome in dsDNA. The first step in the integration process is 3' processing. This step requires a complex comprising the viral genome, matrix protein, Vpr and integrase. This complex is called the pre-integration complex (PIC). The integrase protein removes 2 nucleotides from each 3' end of the viral DNA, leaving recessed CA OH's at the 3' ends. In the second step, the PIC enters cell nucleus. This process is mediated through integrase and Vpr proteins, and allows the virus to infect a non dividing cell. This ability to enter the nucleus is specific of lentiviruses, other retroviruses cannot and rely on cell division to access cell chromosomes. In the third step, termed strand transfer, the integrase protein joins the previously processed 3' ends to the 5' ends of strands of target cellular DNA at the site of integration. The 5'-ends are produced by integrase-catalyzed staggered cuts, 5 bp apart. A Y-shaped, gapped, recombination intermediate results, with the 5'-ends of the viral DNA strands and the 3' ends of target DNA strands remaining unjoined, flanking a gap of 5 bp. The last step is viral DNA integration into host chromosome. This involves host DNA repair synthesis in which the 5 bp gaps between the unjoined strands are filled in and then ligated. Since this process occurs at both cuts flanking the HIV genome, a 5 bp duplication of host DNA is produced at the ends of HIV-1 integration. Alternatively, Integrase may catalyze the excision of viral DNA just after strand transfer, this is termed disintegration. The sequence is that of Gag-Pol polyprotein (gag-pol) from Homo sapiens (Human).